A 158-amino-acid polypeptide reads, in one-letter code: Protein-export protein SecB (158 aa).

It belongs to the SecB family. In terms of assembly, homotetramer, a dimer of dimers. One homotetramer interacts with 1 SecA dimer.

It localises to the cytoplasm. Functionally, one of the proteins required for the normal export of preproteins out of the cell cytoplasm. It is a molecular chaperone that binds to a subset of precursor proteins, maintaining them in a translocation-competent state. It also specifically binds to its receptor SecA. The sequence is that of Protein-export protein SecB from Anaplasma phagocytophilum (strain HZ).